We begin with the raw amino-acid sequence, 997 residues long: Synaptonemal complex protein 1 (997 aa).

The Mediates head to head self-assembly of N-terminal ends motif lies at 102–112 (PMSRLYSKLYK). Residues 118–121 (KKWK) carry the Nuclear localization signal motif. Coiled coils occupy residues 121–176 (KVSI…LIKE) and 212–696 (YVDL…KKIS). Positions 207 to 363 (ETRQVYVDLN…YQLTEEKEAQ (157 aa)) are interaction with SYCE3. The segment at 698 to 792 (EKLLGEVEKA…VSLKKQLEVE (95 aa)) is required for pH-induced assembly of C-terminal ends into antiparallel tetramers. The short motif at 701–704 (LGEV) is the Nuclear localization signal element. The stretch at 768–806 (KVALETELSNIRNELVSLKKQLEVEKEEKEKLKMEQENT) forms a coiled coil. The interval 805–997 (NTAILTDKKD…RLKEAEKLFT (193 aa)) is DNA-binding. Serine 824 carries the post-translational modification Phosphoserine. The disordered stretch occupies residues 828-863 (TSWKFDSKTTPSQNISRLSSSMDSGKSKDNRDSLRA). Residues 835-851 (KTTPSQNISRLSSSMDS) show a composition bias toward polar residues. Over residues 852-861 (GKSKDNRDSL) the composition is skewed to basic and acidic residues. Positions 902-905 (KKRK) match the Nuclear localization signal motif. Position 940 is a phosphothreonine (threonine 940).

As to quaternary structure, structural component of synaptonemal complexes. Homotetramer that consists of an N-terminal four-helical bundle that bifurcates into two elongated C-terminal dimeric coiled coils. This tetrameric building block potentially self-assembles into a supramolecular zipper-like lattice to mediate meiotic chromosome synapsis. Self-assembly is likely initiated by local proton density at chromosome axis, which is predicted to trigger antiparallel back to back assembly of adjacent C-terminal ends into tetrameric structures that anchor to chromosomal DNA. Then the N-terminal ends are predicted to undergo cooperative antiparallel head to head assembly at the midline of synaptonemal complexes central element to form a zipper-like lattice between properly aligned homologous chromosomes. The nascent synapsis generated by SYCP1 is stabilized through interaction with central element proteins SYCE1 and SYCE2. Interacts (via tetrameric core) with SYCE3; the interaction remodels SYCP1 homotetramers to 2:1 heterotrimers with SYCE3. SYCP1/SYCE3 heterotrimers form lattice assemblies as part of the mature synaptonemal complex via both lateral and head-to-head interactions. Forms a complex with EWSR1, PRDM9, SYCP3 and REC8; complex formation is dependent of phosphorylated form of REC8 and requires PRDM9 bound to hotspot DNA; EWSR1 joins PRDM9 with the chromosomal axis through REC8. Interacts with SPO16. As to expression, testis.

The protein resides in the nucleus. It localises to the chromosome. Its subcellular location is the centromere. Functionally, major component of the transverse filaments of synaptonemal complexes, formed between homologous chromosomes during meiotic prophase. Required for normal assembly of the central element of the synaptonemal complexes. Required for normal centromere pairing during meiosis. Required for normal meiotic chromosome synapsis during oocyte and spermatocyte development and for normal male and female fertility. This Rattus norvegicus (Rat) protein is Synaptonemal complex protein 1.